A 755-amino-acid polypeptide reads, in one-letter code: uncharacterized protein (755 aa).

Helical transmembrane passes span 46-66, 70-90, 93-113, 118-138, 143-163, 411-431, 446-466, 482-502, and 514-534; these read LGLG…GGLY, LKTI…GTIV, GWGL…YLAV, GAMV…NVST, FTSL…IWPF, IAHL…IFVL, LLGT…IQDP, ALLR…ALIL, and ALLS…GLAF.

It belongs to the YccS/YhfK family.

It is found in the cell membrane. This is an uncharacterized protein from Synechocystis sp. (strain ATCC 27184 / PCC 6803 / Kazusa).